The chain runs to 179 residues: Bifunctional protein PyrR (179 aa).

The short motif at 100–112 (VILVDDVLFTGRT) is the PRPP-binding element.

Belongs to the purine/pyrimidine phosphoribosyltransferase family. PyrR subfamily.

The catalysed reaction is UMP + diphosphate = 5-phospho-alpha-D-ribose 1-diphosphate + uracil. Its function is as follows. Regulates the transcription of the pyrimidine nucleotide (pyr) operon in response to exogenous pyrimidines. In terms of biological role, also displays a weak uracil phosphoribosyltransferase activity which is not physiologically significant. The polypeptide is Bifunctional protein PyrR (Haemophilus influenzae (strain 86-028NP)).